The chain runs to 711 residues: Double-stranded RNA-specific editase 1 (711 aa).

The disordered stretch occupies residues 1–78 (MDIEDEENMS…KRRKTPGPVL (78 aa)). The segment covering 63–73 (SKYRLKKRRKT) has biased composition (basic residues). Residues 78–144 (LPKNALMQLN…AEKALRSFVQ (67 aa)) enclose the DRBM 1 domain. Interaction with substrate RNA regions lie at residues 83–88 (LMQLNE) and 104–105 (VH). Ser-149 bears the Phosphoserine mark. A disordered region spans residues 176–220 (LFNGFETPDKSEPPFYVGSNGDDSFSSSGDVSLSASPVPASLTQP). Positions 192 to 213 (VGSNGDDSFSSSGDVSLSASPV) are enriched in low complexity. Residues 231–298 (PSGKNPVMIL…AQSALATVFN (68 aa)) enclose the DRBM 2 domain. 2 interaction with substrate RNA regions span residues 237–242 (VMILNE) and His-259. Positions 370–707 (SVSTGTKCIN…VEKPTEQDQF (338 aa)) constitute an A to I editase domain. A Zn(2+)-binding site is contributed by His-394. Residue Glu-396 is the Proton donor of the active site. 1D-myo-inositol hexakisphosphate is bound by residues Arg-400 and Arg-401. Positions 451 and 526 each coordinate Zn(2+). 1D-myo-inositol hexakisphosphate is bound by residues Lys-529, Arg-532, Lys-639, Lys-672, Lys-682, and Lys-700.

Homodimer. Homodimerization is essential for its catalytic activity. Can form heterodimers with isoform 5 of ADAR/ADAR1. It depends on 1D-myo-inositol hexakisphosphate as a cofactor.

It is found in the nucleus. The protein resides in the nucleolus. The catalysed reaction is adenosine in double-stranded RNA + H2O + H(+) = inosine in double-stranded RNA + NH4(+). Functionally, catalyzes the hydrolytic deamination of adenosine to inosine in double-stranded RNA (dsRNA) referred to as A-to-I RNA editing. This may affect gene expression and function in a number of ways that include mRNA translation by changing codons and hence the amino acid sequence of proteins; pre-mRNA splicing by altering splice site recognition sequences; RNA stability by changing sequences involved in nuclease recognition; genetic stability in the case of RNA virus genomes by changing sequences during viral RNA replication; and RNA structure-dependent activities such as microRNA production or targeting or protein-RNA interactions. Can edit both viral and cellular RNAs and can edit RNAs at multiple sites (hyper-editing) or at specific sites (site-specific editing). Its cellular RNA substrates include: bladder cancer-associated protein (BLCAP), neurotransmitter receptors for glutamate (GRIA2 and GRIK2) and serotonin (HTR2C), GABA receptor (GABRA3) and potassium voltage-gated channel (KCNA1). Site-specific RNA editing of transcripts encoding these proteins results in amino acid substitutions which consequently alter their functional activities. Edits GRIA2 at both the Q/R and R/G sites efficiently but converts the adenosine in hotspot1 much less efficiently. Can inhibit cell proliferation and migration and can stimulate exocytosis. The chain is Double-stranded RNA-specific editase 1 (Adarb1) from Mus musculus (Mouse).